The chain runs to 182 residues: ATP-dependent protease subunit HslV (182 aa).

Residue Thr2 is part of the active site. Na(+) is bound by residues Gly157, Cys160, and Thr163.

This sequence belongs to the peptidase T1B family. HslV subfamily. A double ring-shaped homohexamer of HslV is capped on each side by a ring-shaped HslU homohexamer. The assembly of the HslU/HslV complex is dependent on binding of ATP.

It localises to the cytoplasm. The enzyme catalyses ATP-dependent cleavage of peptide bonds with broad specificity.. Its activity is regulated as follows. Allosterically activated by HslU binding. Its function is as follows. Protease subunit of a proteasome-like degradation complex believed to be a general protein degrading machinery. The polypeptide is ATP-dependent protease subunit HslV (Vibrio atlanticus (strain LGP32) (Vibrio splendidus (strain Mel32))).